An 842-amino-acid polypeptide reads, in one-letter code: G-type lectin S-receptor-like serine/threonine-protein kinase At1g11330 (842 aa).

The first 29 residues, 1–29 (MVVSVTIRRRFVLLLLACTCLLSRRLCFG), serve as a signal peptide directing secretion. Residues 30–444 (EDRITFSSPI…AHSELKTHSN (415 aa)) are Extracellular-facing. The 126-residue stretch at 32–157 (RITFSSPIKD…RNNGEILWES (126 aa)) folds into the Bulb-type lectin domain. Residues N63, N94, N122, N130, N196, and N260 are each glycosylated (N-linked (GlcNAc...) asparagine). One can recognise an EGF-like; atypical domain in the interval 294 to 330 (PYTDCDAYGRCGRFGSCHAGENPPCKCVKGFVPKNNT). 2 disulfides stabilise this stretch: C298-C310 and C304-C318. N-linked (GlcNAc...) asparagine glycosylation is found at N328, N336, N354, and N396. Residues 349 to 435 (CERQRNVSNG…SGIDLFIRVA (87 aa)) form the PAN domain. Cystine bridges form between C389–C410 and C393–C399. The helical transmembrane segment at 445–465 (LAVMIAAPVIGVMLIAAVCVL) threads the bilayer. The Cytoplasmic portion of the chain corresponds to 466–842 (LACRKYKKRP…DVSLTAVTGR (377 aa)). The 287-residue stretch at 524–810 (FSLRNKLGQG…SLADPKQPAF (287 aa)) folds into the Protein kinase domain. ATP contacts are provided by residues 530-538 (LGQGGFGPV) and K552. A phosphoserine mark is found at S558 and S573. The segment at 613-630 (MKQKILDWKTRFNIMEGI) is caM-binding. Residue D649 is the Proton acceptor of the active site. Phosphoserine is present on residues S653 and S666. T683 is modified (phosphothreonine). Residues S726, S727, S821, and S830 each carry the phosphoserine modification. The tract at residues 814 to 842 (RGASEAESSDQSSQKVSINDVSLTAVTGR) is disordered. Residues 818–827 (EAESSDQSSQ) show a composition bias toward low complexity. Residues 828-842 (KVSINDVSLTAVTGR) show a composition bias toward polar residues. T837 bears the Phosphothreonine mark.

It belongs to the protein kinase superfamily. Ser/Thr protein kinase family.

Its subcellular location is the cell membrane. It catalyses the reaction L-seryl-[protein] + ATP = O-phospho-L-seryl-[protein] + ADP + H(+). The catalysed reaction is L-threonyl-[protein] + ATP = O-phospho-L-threonyl-[protein] + ADP + H(+). The sequence is that of G-type lectin S-receptor-like serine/threonine-protein kinase At1g11330 from Arabidopsis thaliana (Mouse-ear cress).